Consider the following 664-residue polypeptide: DNA primase (664 aa).

The CHC2-type zinc-finger motif lies at C40 to C64. The span at G94–G104 shows a compositional bias: basic and acidic residues. Residues G94 to S115 are disordered. Residues D262 to P344 enclose the Toprim domain. Mg(2+)-binding residues include E268, D312, and D314. The disordered stretch occupies residues P483–V521. Basic and acidic residues predominate over residues W487–A515.

The protein belongs to the DnaG primase family. In terms of assembly, monomer. Interacts with DnaB. Requires Zn(2+) as cofactor. Mg(2+) is required as a cofactor.

It carries out the reaction ssDNA + n NTP = ssDNA/pppN(pN)n-1 hybrid + (n-1) diphosphate.. Functionally, RNA polymerase that catalyzes the synthesis of short RNA molecules used as primers for DNA polymerase during DNA replication. The protein is DNA primase of Pseudomonas aeruginosa (strain ATCC 15692 / DSM 22644 / CIP 104116 / JCM 14847 / LMG 12228 / 1C / PRS 101 / PAO1).